We begin with the raw amino-acid sequence, 620 residues long: Endoglucanase 10 (620 aa).

A disordered region spans residues 1–26 (MFGRDPWGGPLEISNADSATDDDRSR). The helical; Signal-anchor for type II membrane protein transmembrane segment at 72–92 (IFMWTVGTILGVGLFIGFVMM) threads the bilayer. Aspartate 165 (nucleophile) is an active-site residue. 6 N-linked (GlcNAc...) asparagine glycosylation sites follow: asparagine 216, asparagine 314, asparagine 323, asparagine 344, asparagine 408, and asparagine 425. Residues histidine 513 and aspartate 561 contribute to the active site. Asparagine 567 carries N-linked (GlcNAc...) asparagine glycosylation. Glutamate 570 is an active-site residue.

Belongs to the glycosyl hydrolase 9 (cellulase E) family. As to expression, ubiquitous.

Its subcellular location is the membrane. The catalysed reaction is Endohydrolysis of (1-&gt;4)-beta-D-glucosidic linkages in cellulose, lichenin and cereal beta-D-glucans.. The chain is Endoglucanase 10 (GLU2) from Oryza sativa subsp. japonica (Rice).